Here is a 194-residue protein sequence, read N- to C-terminus: CD-NTase-associated protein 15 (194 aa).

Positions 1 to 73 are required for cell toxicity; the sequence is MRMWELLPSK…DYLKHKFCPD (73 aa). Transmembrane regions (helical) follow at residues 15–35 and 43–63; these read ISTIISIIVFLFFLEFLGQPV and ITTITILAFIFGKYLWKYFYI.

It belongs to the CBASS Cap15 membrane effector family. The beta barrel domain oligomerizes; in the presence of cyclic nucleotides (probably 3',3'-cGAMP, but the cognate CD-NTase makes at least 4 other cyclic nucleotides) higher-level oligomers are detected.

The protein resides in the cell inner membrane. Effector protein of a CBASS antivirus system. CBASS (cyclic oligonucleotide-based antiphage signaling system) provides immunity against bacteriophages. The CD-NTase protein (CdnB) synthesizes cyclic nucleotides in response to infection; these serve as specific second messenger signals. The signals activate a diverse range of effectors, leading to bacterial cell death and thus abortive phage infection. Causes cell death in response to 3',3'-cGAMP upon coexpression in E.coli with V.cholerae DncV; inactivating DncV prevents cell death. Upon induction in E.coli with non-cognate DncV, the cell inner membrane shrinks and separates from the cell wall with a concomitant increase in the periplasm. Binds cyclic nucleotide second messenger 3',3'-cGAMP, probably oligomerizing, and induces cell membrane shrinkage and rupture, leading to cell death. A type I CBASS system. In terms of biological role, protects E.coli against phage infection. When the CBASS operon (cdnB-cap15) is introduced in E.coli MG1655 there is about 100-fold protection against phage T2 and about 10-fold protection against phage T5 and T6. The protein is CD-NTase-associated protein 15 of Escherichia albertii.